Here is a 141-residue protein sequence, read N- to C-terminus: Probable mobile endonuclease E (141 aa).

Residues 115-141 (KMSKSENRSAFNRRNQTQNIGGNQRKG) are disordered. Polar residues predominate over residues 122-141 (RSAFNRRNQTQNIGGNQRKG).

This chain is Probable mobile endonuclease E (mobE), found in Escherichia coli (Bacteriophage T4).